The chain runs to 147 residues: Phosphoribosyl-AMP cyclohydrolase 2 (147 aa).

Mg(2+) is bound at residue Asp-99. Residue Cys-100 participates in Zn(2+) binding. Mg(2+) is bound by residues Asp-101 and Asp-103. Positions 116 and 123 each coordinate Zn(2+).

Belongs to the PRA-CH family. In terms of assembly, homodimer. Mg(2+) is required as a cofactor. Requires Zn(2+) as cofactor.

Its subcellular location is the cytoplasm. It catalyses the reaction 1-(5-phospho-beta-D-ribosyl)-5'-AMP + H2O = 1-(5-phospho-beta-D-ribosyl)-5-[(5-phospho-beta-D-ribosylamino)methylideneamino]imidazole-4-carboxamide. Its pathway is amino-acid biosynthesis; L-histidine biosynthesis; L-histidine from 5-phospho-alpha-D-ribose 1-diphosphate: step 3/9. In terms of biological role, catalyzes the hydrolysis of the adenine ring of phosphoribosyl-AMP. In Pseudomonas fluorescens (strain ATCC BAA-477 / NRRL B-23932 / Pf-5), this protein is Phosphoribosyl-AMP cyclohydrolase 2.